Reading from the N-terminus, the 510-residue chain is Bifunctional purine biosynthesis protein PurH (510 aa).

In terms of domain architecture, MGS-like spans 1–144; it reads MSKRALISVT…KNYKDVIVVV (144 aa).

The protein belongs to the PurH family.

It carries out the reaction (6R)-10-formyltetrahydrofolate + 5-amino-1-(5-phospho-beta-D-ribosyl)imidazole-4-carboxamide = 5-formamido-1-(5-phospho-D-ribosyl)imidazole-4-carboxamide + (6S)-5,6,7,8-tetrahydrofolate. The enzyme catalyses IMP + H2O = 5-formamido-1-(5-phospho-D-ribosyl)imidazole-4-carboxamide. The protein operates within purine metabolism; IMP biosynthesis via de novo pathway; 5-formamido-1-(5-phospho-D-ribosyl)imidazole-4-carboxamide from 5-amino-1-(5-phospho-D-ribosyl)imidazole-4-carboxamide (10-formyl THF route): step 1/1. It functions in the pathway purine metabolism; IMP biosynthesis via de novo pathway; IMP from 5-formamido-1-(5-phospho-D-ribosyl)imidazole-4-carboxamide: step 1/1. The polypeptide is Bifunctional purine biosynthesis protein PurH (Clostridioides difficile (strain 630) (Peptoclostridium difficile)).